The sequence spans 306 residues: UDP-N-acetylenolpyruvoylglucosamine reductase (306 aa).

Residues 34–198 enclose the FAD-binding PCMH-type domain; it reads VGGPADLLIT…LEVTFKLHNS (165 aa). Arg-177 is an active-site residue. Catalysis depends on Ser-227, which acts as the Proton donor. The active site involves Glu-297.

It belongs to the MurB family. Requires FAD as cofactor.

The protein resides in the cytoplasm. It carries out the reaction UDP-N-acetyl-alpha-D-muramate + NADP(+) = UDP-N-acetyl-3-O-(1-carboxyvinyl)-alpha-D-glucosamine + NADPH + H(+). Its pathway is cell wall biogenesis; peptidoglycan biosynthesis. Cell wall formation. This is UDP-N-acetylenolpyruvoylglucosamine reductase from Clostridium botulinum (strain Langeland / NCTC 10281 / Type F).